Consider the following 267-residue polypeptide: Rhomboid-type serine protease 2 (267 aa).

A run of 6 helical transmembrane segments spans residues 20-40 (LPLF…ASLQ), 67-87 (FPLI…LTPL), 99-119 (TSLA…YVLI), 126-146 (ANHG…MESI), 155-179 (FVIG…AALI), and 185-206 (LGHL…KLLA). Catalysis depends on Ser134, which acts as the Nucleophile. His187 is a catalytic residue. The interval 247 to 267 (RPGPSGSAATELVGTTQRLGP) is disordered.

The protein belongs to the peptidase S54 family.

The protein resides in the golgi apparatus membrane. It is found in the golgi apparatus. It localises to the cis-Golgi network membrane. The catalysed reaction is Cleaves type-1 transmembrane domains using a catalytic dyad composed of serine and histidine that are contributed by different transmembrane domains.. In terms of biological role, probable rhomboid-type serine protease that catalyzes intramembrane proteolysis. The polypeptide is Rhomboid-type serine protease 2 (RBD2) (Gibberella zeae (strain ATCC MYA-4620 / CBS 123657 / FGSC 9075 / NRRL 31084 / PH-1) (Wheat head blight fungus)).